We begin with the raw amino-acid sequence, 212 residues long: UDP-N-acetylglucosamine transferase subunit ALG13 (212 aa).

This sequence belongs to the glycosyltransferase 28 family. In terms of assembly, heterodimer with ALG14 to form a functional enzyme.

The protein localises to the endoplasmic reticulum. It catalyses the reaction an N-acetyl-alpha-D-glucosaminyl-diphospho-di-trans,poly-cis-dolichol + UDP-N-acetyl-alpha-D-glucosamine = an N,N'-diacetylchitobiosyl-diphospho-di-trans,poly-cis-dolichol + UDP + H(+). Its function is as follows. Involved in protein N-glycosylation. Essential for the second step of the dolichol-linked oligosaccharide pathway. This is UDP-N-acetylglucosamine transferase subunit ALG13 (ALG13) from Debaryomyces hansenii (strain ATCC 36239 / CBS 767 / BCRC 21394 / JCM 1990 / NBRC 0083 / IGC 2968) (Yeast).